The primary structure comprises 407 residues: Phosphopentomutase (407 aa).

Mn(2+) contacts are provided by D10, D306, H311, D347, H348, and H359.

This sequence belongs to the phosphopentomutase family. Mn(2+) is required as a cofactor.

Its subcellular location is the cytoplasm. The enzyme catalyses 2-deoxy-alpha-D-ribose 1-phosphate = 2-deoxy-D-ribose 5-phosphate. It carries out the reaction alpha-D-ribose 1-phosphate = D-ribose 5-phosphate. The protein operates within carbohydrate degradation; 2-deoxy-D-ribose 1-phosphate degradation; D-glyceraldehyde 3-phosphate and acetaldehyde from 2-deoxy-alpha-D-ribose 1-phosphate: step 1/2. Functionally, isomerase that catalyzes the conversion of deoxy-ribose 1-phosphate (dRib-1-P) and ribose 1-phosphate (Rib-1-P) to deoxy-ribose 5-phosphate (dRib-5-P) and ribose 5-phosphate (Rib-5-P), respectively. This Yersinia pestis bv. Antiqua (strain Antiqua) protein is Phosphopentomutase.